A 428-amino-acid polypeptide reads, in one-letter code: Ectonucleoside triphosphate diphosphohydrolase 5 (428 aa).

The first 24 residues, 1-24 (MTSSRLPVLLALVFSSLSPVLSHS), serve as a signal peptide directing secretion. The active-site Proton acceptor is Glu172. N-linked (GlcNAc...) asparagine glycosylation is present at Asn232. 2 disulfides stabilise this stretch: Cys272-Cys303 and Cys363-Cys377.

It belongs to the GDA1/CD39 NTPase family. Monomer; active form. Homodimer; disulfide-linked. Homodimers are enzymatically inactive. It depends on Ca(2+) as a cofactor. Mg(2+) serves as cofactor.

The protein localises to the endoplasmic reticulum. It localises to the secreted. The enzyme catalyses a ribonucleoside 5'-diphosphate + H2O = a ribonucleoside 5'-phosphate + phosphate + H(+). The catalysed reaction is GDP + H2O = GMP + phosphate + H(+). It catalyses the reaction UDP + H2O = UMP + phosphate + H(+). It carries out the reaction IDP + H2O = IMP + phosphate + H(+). The enzyme catalyses CDP + H2O = CMP + phosphate + H(+). The catalysed reaction is ADP + H2O = AMP + phosphate + H(+). Its pathway is protein modification; protein glycosylation. In terms of biological role, hydrolyzes nucleoside diphosphates with a preference for GDP, IDP and UDP compared to ADP and CDP. In the lumen of the endoplasmic reticulum, hydrolyzes UDP that acts as an end-product feedback inhibitor of the UDP-Glc:glycoprotein glucosyltransferases. UMP can be transported back by an UDP-sugar antiporter to the cytosol where it is consumed to regenerate UDP-glucose. Therefore, it positively regulates protein reglucosylation by clearing UDP from the ER lumen and by promoting the regeneration of UDP-glucose. Protein reglucosylation is essential to proper glycoprotein folding and quality control in the ER. This Gallus gallus (Chicken) protein is Ectonucleoside triphosphate diphosphohydrolase 5 (ENTPD5).